The primary structure comprises 323 residues: tRNA U34 carboxymethyltransferase (323 aa).

Carboxy-S-adenosyl-L-methionine contacts are provided by residues lysine 91, tryptophan 105, lysine 110, glycine 130, 181 to 182, methionine 196, tyrosine 200, and arginine 315; that span reads IE.

Belongs to the class I-like SAM-binding methyltransferase superfamily. CmoB family. In terms of assembly, homotetramer.

It carries out the reaction carboxy-S-adenosyl-L-methionine + 5-hydroxyuridine(34) in tRNA = 5-carboxymethoxyuridine(34) in tRNA + S-adenosyl-L-homocysteine + H(+). Its function is as follows. Catalyzes carboxymethyl transfer from carboxy-S-adenosyl-L-methionine (Cx-SAM) to 5-hydroxyuridine (ho5U) to form 5-carboxymethoxyuridine (cmo5U) at position 34 in tRNAs. The sequence is that of tRNA U34 carboxymethyltransferase from Sodalis glossinidius (strain morsitans).